Reading from the N-terminus, the 733-residue chain is MMRRPWLLSALVAWVKLPSVQGEDLFSLGEIDGSLLNGASDACVAAINTKVSCPSTLGLLHFDSDMELDTAEIKELCQGSCLTSLADLRDSVKRTCGSEVTFEDPVSGALWKASYLMEEAIYYAERACLRKGNGQYCNTWFQSAPADASLCDECYKLILWHNAQSPLSEDTSEQKEIYTSASSSCGYKKQPTQTYPPLLVSSPMATPSCSSEYTIKTGDTFLSVSESQRVSTHDLATANRLDSLVSDFPSSGKLCIRNQCDVYVVKSGDTCESIQSENGLSKARLRSWNPFINGYCDNISSYVNQTICISNPLGDYKVPENQDAAGFDTPAAVPDNIAPNTTTNCGLFHNVTAGDDCGTIGLKYSISLDDFIFLNSMIWPNCTNLWLRASYCVAPVGDIADYPGYGPEEDEWTIEPQESTEIAEIPHIGWLNDSRPYVPLANSTREDCWEYLWWNETYAGSPISCREAALGYELDLEQFFLWNPSLDQNEPDAVSPTYDFPCTISPFVSYCMQLASPTPVPKTPRVPPSPRAAGEIANCTRWFMGYFDCASQLSLSRMTMEKMYRYNPSLKEDCSGYTLGTFYCHETLDDLYHYDDALYGDDETSPITSSAPTSTTASSKTSSSAAQPTNVSTDGTCGGAKGKTCLNSAFGDCCSSSGYCGDSLPYCGGGCQSKFGKCDAGSEKISPDGTCGGDKEYTCEGSQFGDCCSQYGYCGRATDNCGKGCQKQYGVCT.

Positions methionine 1–glycine 22 are cleaved as a signal peptide. 2 LysM domains span residues serine 211–isoleucine 256 and aspartate 261–isoleucine 309. N-linked (GlcNAc...) asparagine glycosylation is found at asparagine 298, asparagine 304, asparagine 340, asparagine 350, asparagine 381, asparagine 432, asparagine 442, asparagine 455, and asparagine 538. The LysM 3 domain maps to leucine 347–valine 393. Over residues serine 605 to threonine 629 the composition is skewed to low complexity. The tract at residues serine 605–cysteine 637 is disordered. Asparagine 630 is a glycosylation site (N-linked (GlcNAc...) asparagine). 2 Chitin-binding type-1 domains span residues aspartate 634–alanine 680 and aspartate 688–threonine 733. Intrachain disulfides connect cysteine 637–cysteine 654, cysteine 645–cysteine 660, cysteine 653–cysteine 667, cysteine 671–cysteine 678, cysteine 691–cysteine 708, cysteine 699–cysteine 714, cysteine 707–cysteine 721, and cysteine 725–cysteine 732.

This sequence belongs to the secreted LysM effector family.

It localises to the secreted. Its subcellular location is the cell membrane. The protein localises to the vacuole. Secreted effector that enables the plant pathogenic fungus to manipulate host defenses for successful infection. Not involved in host recognition and penetration but suppresses host cell death and promotes fumonisin biosynthesis while the pathogen colonizes maize kernels. This chain is Non-secreted LysM effector LCP1, found in Gibberella moniliformis (strain M3125 / FGSC 7600) (Maize ear and stalk rot fungus).